We begin with the raw amino-acid sequence, 144 residues long: MKLNDLSPAPGSRREKHRPGRGIGSGLGKTGGRGHKGQTSRSGGTIAPGFEGGQQPLHRRLPKFGFVSLKAMDRAEVRLSELAKVEGDIVTVQSLKDANVINQNVQRVKIMLSGEVTRAVTIKGIAATKGARAAIEAAGGKFEE.

A disordered region spans residues 1-57 (MKLNDLSPAPGSRREKHRPGRGIGSGLGKTGGRGHKGQTSRSGGTIAPGFEGGQQPL). Over residues 21 to 31 (RGIGSGLGKTG) the composition is skewed to gly residues.

It belongs to the universal ribosomal protein uL15 family. In terms of assembly, part of the 50S ribosomal subunit.

In terms of biological role, binds to the 23S rRNA. This chain is Large ribosomal subunit protein uL15, found in Pseudomonas fluorescens (strain ATCC BAA-477 / NRRL B-23932 / Pf-5).